A 282-amino-acid polypeptide reads, in one-letter code: 2-dehydro-3-deoxyphosphooctonate aldolase (282 aa).

Belongs to the KdsA family.

The protein localises to the cytoplasm. It carries out the reaction D-arabinose 5-phosphate + phosphoenolpyruvate + H2O = 3-deoxy-alpha-D-manno-2-octulosonate-8-phosphate + phosphate. Its pathway is carbohydrate biosynthesis; 3-deoxy-D-manno-octulosonate biosynthesis; 3-deoxy-D-manno-octulosonate from D-ribulose 5-phosphate: step 2/3. It functions in the pathway bacterial outer membrane biogenesis; lipopolysaccharide biosynthesis. This chain is 2-dehydro-3-deoxyphosphooctonate aldolase, found in Bartonella bacilliformis (strain ATCC 35685 / KC583 / Herrer 020/F12,63).